A 171-amino-acid polypeptide reads, in one-letter code: Transcriptional repressor NrdR (171 aa).

Positions 1-21 (MQCPHCQHTDSRVLESRSSEN) are disordered. A zinc finger spans residues 3–34 (CPHCQHTDSRVLESRSSENGQSIRRRRECLQC). The segment covering 7-18 (QHTDSRVLESRS) has biased composition (basic and acidic residues). In terms of domain architecture, ATP-cone spans 49–139 (ITVIKKDGKR…VYGNFQGIRD (91 aa)).

Belongs to the NrdR family. Requires Zn(2+) as cofactor.

Functionally, negatively regulates transcription of bacterial ribonucleotide reductase nrd genes and operons by binding to NrdR-boxes. In Microcystis aeruginosa (strain NIES-843 / IAM M-2473), this protein is Transcriptional repressor NrdR.